The primary structure comprises 318 residues: O-glucosyltransferase LpsA (318 aa).

The protein belongs to the glycosyltransferase 90 family.

It functions in the pathway protein modification; protein glycosylation. In terms of biological role, involved in lipopolysaccharide core biosynthesis. The polypeptide is O-glucosyltransferase LpsA (lpsA) (Dichelobacter nodosus (Bacteroides nodosus)).